Here is a 401-residue protein sequence, read N- to C-terminus: Multidrug resistance protein MdtH (401 aa).

11 helical membrane passes run 13–33 (YFLL…FPLI), 34–54 (SIRF…ALGL), 99–116 (PWIL…GTLF), 139–159 (LLMM…SWLL), 165–185 (FVCW…VWLL), 214–234 (VLTL…LPIV), 243–263 (AAVK…LYPI), 277–297 (LMFG…ITHL), 299–319 (TLFM…PARE), 340–360 (LGLA…YDTG), and 368–388 (LPWF…YWQF).

Belongs to the major facilitator superfamily. DHA1 family. MdtH (TC 2.A.1.2.21) subfamily.

The protein localises to the cell inner membrane. This is Multidrug resistance protein MdtH from Yersinia enterocolitica serotype O:8 / biotype 1B (strain NCTC 13174 / 8081).